A 623-amino-acid polypeptide reads, in one-letter code: Calnexin (623 aa).

Residues 1–21 form the signal peptide; that stretch reads MLNRKWSFVFLTFLLVISVNA. A Ca(2+)-binding site is contributed by D108. C151 and C185 form a disulfide bridge. An alpha-D-glucoside is bound by residues Y155, K157, Y176, and D183. The N-linked (GlcNAc...) asparagine glycan is linked to N202. Residues 260–337 are disordered; sequence SLTPPKEIFD…QKPQDWDEDM (78 aa). A compositionally biased stretch (basic and acidic residues) spans 266 to 276; that stretch reads EIFDETDLKPE. The p domain (Extended arm) stretch occupies residues 267–400; that stretch reads IFDETDLKPE…RLIDNPNYFE (134 aa). Tandem repeats lie at residues 269-281, 286-298, 305-317, 324-336, and 339-349. 2 4 X approximate repeats regions span residues 269 to 336 and 339 to 396; these read DETD…WDED and GSWE…IDNP. Composition is skewed to acidic residues over residues 277-287 and 314-323; these read DWDEREQIEDE and WNEEENELIP. Cysteines 351 and 357 form a disulfide. 3 repeat units span residues 358–368, 372–382, and 386–396. E416 is an an alpha-D-glucoside binding site. Ca(2+) is bound at residue D427. A helical transmembrane segment spans residues 480–500; sequence LWAVYILCILLPLIAIGVFCF. The disordered stretch occupies residues 536-623; it reads IAEDEEDNQP…AKRRTARRGD (88 aa). The segment covering 556–565 has biased composition (acidic residues); the sequence is IDEDEQDEVE. Over residues 566-581 the composition is skewed to low complexity; it reads QQPSSSKTASSESSSA. Residues 614–623 show a composition bias toward basic residues; that stretch reads AKRRTARRGD.

This sequence belongs to the calreticulin family. Glycosylation is important for its biological activity.

The protein localises to the endoplasmic reticulum membrane. Its subcellular location is the cytoplasm. It is found in the perinuclear region. It localises to the cytoplasmic vesicle. Its function is as follows. Calcium-binding protein that interacts with newly synthesized monoglucosylated glycoproteins in the endoplasmic reticulum. It may act in assisting protein assembly and/or in the retention within the ER of unassembled protein subunits. It seems to play a major role in the quality control apparatus of the ER by the retention of incorrectly folded proteins. Required for embryogenesis and larval development under heat and ER stress conditions. May be important for germ cell development. Involved in neuronal necrotic cell death. The protein is Calnexin of Caenorhabditis briggsae.